The chain runs to 87 residues: Defensin-A (87 aa).

An N-terminal signal peptide occupies residues M1–A19. A propeptide spanning residues L20 to Q44 is cleaved from the precursor. Disulfide bonds link C57/C78, C64/C83, and C68/C85.

Hemolymph and fat body.

The protein resides in the secreted. Functionally, antibacterial peptide mostly active against Gram-positive and Gram negative bacteria. In Glossina morsitans morsitans (Savannah tsetse fly), this protein is Defensin-A.